Reading from the N-terminus, the 625-residue chain is Thrombopoietin receptor (625 aa).

An N-terminal signal peptide occupies residues 1 to 25 (MPSWALFMVTSCLLLALPNQAQVTS). Residues 26–482 (QDVFLLALGT…RVSTGSETAW (457 aa)) are Extracellular-facing. N-linked (GlcNAc...) asparagine glycosylation occurs at Asn117. 2 consecutive Fibronectin type-III domains span residues 178–270 (NATA…PVTV) and 383–479 (PTPS…TGSE). The short motif at 465–469 (WSAWS) is the WSXWS motif element. A helical membrane pass occupies residues 483-504 (ITLVTALLLVLSLSALLGLLLL). Over 505–625 (KWQFPAHYRR…YLPLSYWQQP (121 aa)) the chain is Cytoplasmic. Positions 519–527 (LWPSLPDLH) match the Box 1 motif motif. Glycyl lysine isopeptide (Lys-Gly) (interchain with G-Cter in ubiquitin) cross-links involve residues Lys544 and Lys564. 2 positions are modified to phosphotyrosine: Tyr616 and Tyr621.

The protein belongs to the type I cytokine receptor family. Type 1 subfamily. In terms of assembly, homodimer. Interacts with ATXN2L. Interacts with JAK2 and TYK2; these interactions increase MPL localization to the cell membrane. Interacts with THPO. Interacts with SHIP/INPP5D. Interacts with kinases BTK and SYK. Ubiquitination at Lys-544 and Lys-564 targets MPL for degradation by both the lysosomal and proteasomal pathways. The E3 ubiquitin-protein ligase CBL significantly contributes to this ubiquitination.

It is found in the cell membrane. The protein localises to the golgi apparatus. The protein resides in the cell surface. In terms of biological role, receptor for thrombopoietin that regulates hematopoietic stem cell renewal, megakaryocyte differentiation, and platelet formation. Upon activation by THPO, induces rapid tyrosine phosphorylation and activation of JAK2, providing docking sites for many signaling proteins such as STAT5, SHIP/INPP5D, GRB2, SOS1 and PI3K. In turn, These signaling cascades lead to the proliferation, survival, and differentiation of megakaryocytes, ultimately leading to increased platelet production. Functionally, acts as an inhibitor of thrombopoietin signaling by promoting protein down-regulation of full-length isoform Mpl-fl. The protein is Thrombopoietin receptor (Mpl) of Mus musculus (Mouse).